We begin with the raw amino-acid sequence, 411 residues long: Phospholipase ABHD3 (411 aa).

Residues 25–45 (VGFFGSGVGLSLILGFSVAYA) form a helical; Signal-anchor for type II membrane protein membrane-spanning segment. The AB hydrolase-1 domain maps to 140-233 (PTILLLPGLT…MLLLNYLGKI (94 aa)). Active-site charge relay system residues include Ser-220, Asp-346, and His-375.

The protein belongs to the AB hydrolase superfamily. AB hydrolase 4 family. Widely expressed with higher expression in liver.

The protein resides in the membrane. It carries out the reaction a 1,2-diacyl-sn-glycero-3-phosphocholine + H2O = a 1-acyl-sn-glycero-3-phosphocholine + a fatty acid + H(+). The catalysed reaction is a 1,2-diacyl-sn-glycero-3-phosphocholine + H2O = a 2-acyl-sn-glycero-3-phosphocholine + a fatty acid + H(+). The enzyme catalyses 1-tetradecanoyl-2-(9Z,12Z-octadecadienoyl)-sn-glycero-3-phosphocholine + H2O = 2-(9Z,12Z-octadecadienoyl)-sn-glycero-3-phosphocholine + tetradecanoate + H(+). It catalyses the reaction 1-tetradecanoyl-2-(9Z,12Z-octadecadienoyl)-sn-glycero-3-phosphocholine + H2O = 1-tetradecanoyl-sn-glycero-3-phosphocholine + (9Z,12Z)-octadecadienoate + H(+). It carries out the reaction 1-tetradecanoyl-2-(5Z,8Z,11Z,14Z-eicosatetraenoyl)-sn-glycero-3-phosphocholine + H2O = 2-(5Z,8Z,11Z,14Z)-eicosatetraenoyl-sn-glycero-3-phosphocholine + tetradecanoate + H(+). The catalysed reaction is 1-tetradecanoyl-2-(4Z,7Z,10Z,13Z,16Z,19Z-docosahexaenoyl)-sn-glycero-3-phosphocholine + H2O = 2-(4Z,7Z,10Z,13Z,16Z,19Z-docosahexaenoyl)-sn-glycero-3-phosphocholine + tetradecanoate + H(+). The enzyme catalyses 1,2-ditetradecanoyl-sn-glycero-3-phosphocholine + H2O = 2-tetradecanoyl-sn-glycero-3-phosphocholine + tetradecanoate + H(+). It catalyses the reaction 1-octadecanoyl-2-acetyl-sn-glycero-3-phosphocholine + H2O = 1-octadecanoyl-sn-glycero-3-phosphocholine + acetate + H(+). It carries out the reaction 1,2-ditetradecanoyl-sn-glycero-3-phosphocholine + H2O = 1-tetradecanoyl-sn-glycero-3-phosphocholine + tetradecanoate + H(+). The catalysed reaction is 1-octadecanoyl-2-pentanoyl-sn-glycero-3-phosphocholine + H2O = pentanoate + 1-octadecanoyl-sn-glycero-3-phosphocholine + H(+). The enzyme catalyses 1-octadecanoyl-2-hexanoyl-sn-glycero-3-phosphocholine + H2O = hexanoate + 1-octadecanoyl-sn-glycero-3-phosphocholine + H(+). It catalyses the reaction 1-octadecanoyl-2-octanoyl-sn-glycero-3-phosphocholine + H2O = 1-octadecanoyl-sn-glycero-3-phosphocholine + octanoate + H(+). It carries out the reaction 1-octadecanoyl-2-nonanoyl-sn-glycero-3-phosphocholine + H2O = nonanoate + 1-octadecanoyl-sn-glycero-3-phosphocholine + H(+). The catalysed reaction is 1-O-hexadecyl-2-nonadioyl-sn-glycero-3-phosphocholine + H2O = nonanedioate + 1-O-hexadecyl-sn-glycero-3-phosphocholine + H(+). The enzyme catalyses 1-hexadecanoyl-2-nonadioyl-sn-glycero-3-phosphocholine + H2O = nonanedioate + 1-hexadecanoyl-sn-glycero-3-phosphocholine + H(+). It catalyses the reaction 1-hexadecanoyl-2-(9-oxononanoyl)-sn-glycero-3-phosphocholine + H2O = 9-oxononanoate + 1-hexadecanoyl-sn-glycero-3-phosphocholine + H(+). It carries out the reaction 1-hexadecanoyl-2-(5-oxopentanoyl)-sn-glycero-3-phosphocholine + H2O = 5-oxopentanoate + 1-hexadecanoyl-sn-glycero-3-phosphocholine + H(+). The catalysed reaction is 1-hexadecanoyl-2-glutaroyl-sn-glycero-3-phosphocholine + H2O = glutarate + 1-hexadecanoyl-sn-glycero-3-phosphocholine + H(+). The enzyme catalyses 1-O-hexadecyl-2-acetyl-sn-glycero-3-phosphocholine + H2O = 1-O-hexadecyl-sn-glycero-3-phosphocholine + acetate + H(+). Functionally, phospholipase that may play a role in phospholipids remodeling. May selectively cleave myristate (C14)-containing phosphatidylcholines through its predominant phospholipase 1 activity, cleaving preferentially acyl groups in sn1 position. In parallel, may have a minor phospholipase 2 activity acting on acyl groups in position sn2. In addition to (C14)-containing phosphatidylcholines, may also act on other medium-chain-containing and oxidatively truncated phospholipids. In Mus musculus (Mouse), this protein is Phospholipase ABHD3.